A 349-amino-acid chain; its full sequence is Phenylalanine--tRNA ligase alpha subunit (349 aa).

Residue glutamate 261 coordinates Mg(2+).

The protein belongs to the class-II aminoacyl-tRNA synthetase family. Phe-tRNA synthetase alpha subunit type 1 subfamily. Tetramer of two alpha and two beta subunits. Requires Mg(2+) as cofactor.

The protein localises to the cytoplasm. The enzyme catalyses tRNA(Phe) + L-phenylalanine + ATP = L-phenylalanyl-tRNA(Phe) + AMP + diphosphate + H(+). This chain is Phenylalanine--tRNA ligase alpha subunit, found in Leuconostoc citreum (strain KM20).